A 217-amino-acid polypeptide reads, in one-letter code: tRNA (guanine-N(7)-)-methyltransferase (217 aa).

Positions 44, 69, 96, and 118 each coordinate S-adenosyl-L-methionine. Residue Asp-118 is part of the active site. A substrate-binding site is contributed by Lys-122. Positions 124–129 are interaction with RNA; sequence RHEKRR. Residues Asp-154 and 193 to 196 each bind substrate; that span reads TEYE.

The protein belongs to the class I-like SAM-binding methyltransferase superfamily. TrmB family.

The catalysed reaction is guanosine(46) in tRNA + S-adenosyl-L-methionine = N(7)-methylguanosine(46) in tRNA + S-adenosyl-L-homocysteine. Its pathway is tRNA modification; N(7)-methylguanine-tRNA biosynthesis. Its function is as follows. Catalyzes the formation of N(7)-methylguanine at position 46 (m7G46) in tRNA. This Lactococcus lactis subsp. lactis (strain IL1403) (Streptococcus lactis) protein is tRNA (guanine-N(7)-)-methyltransferase.